A 159-amino-acid chain; its full sequence is Probable cyclic pyranopterin monophosphate synthase (159 aa).

Substrate is bound by residues 74-76 (MCH) and 110-111 (ME). Aspartate 125 is an active-site residue.

Belongs to the MoaC family. As to quaternary structure, homohexamer; trimer of dimers.

The enzyme catalyses (8S)-3',8-cyclo-7,8-dihydroguanosine 5'-triphosphate = cyclic pyranopterin phosphate + diphosphate. It participates in cofactor biosynthesis; molybdopterin biosynthesis. Its function is as follows. Catalyzes the conversion of (8S)-3',8-cyclo-7,8-dihydroguanosine 5'-triphosphate to cyclic pyranopterin monophosphate (cPMP). In Methanococcoides burtonii (strain DSM 6242 / NBRC 107633 / OCM 468 / ACE-M), this protein is Probable cyclic pyranopterin monophosphate synthase.